Consider the following 494-residue polypeptide: Potassium voltage-gated channel subfamily A member 2 (494 aa).

A disordered region spans residues 1–25 (MTVATGDPSDEAAAHPGNPAEYDPD). The tetramerization domain stretch occupies residues 1–124 (MTVATGDPSD…YELGDEAIEL (124 aa)). Over 1 to 159 (MTVATGDPSD…LLFEYPESSG (159 aa)) the chain is Cytoplasmic. Residues 160 to 181 (PARIIAIISVMVILISIVSFCL) form a helical membrane-spanning segment. Over 182 to 216 (ETLPIFRNDDDEPHSVFDTNTNTTIYFTSTYFTDP) the chain is Extracellular. Asn203 carries an N-linked (GlcNAc...) asparagine glycan. Residues 217-238 (FFILETLCIIWFSFEFLVRLFA) traverse the membrane as a helical segment. Cys239 is lipidated: S-palmitoyl cysteine. Residues 239–249 (CPSKSGFFGNV) are Cytoplasmic-facing. Residues 250 to 270 (MNIIDVVAIIPYFITLATELA) traverse the membrane as a helical segment. Residues 271–284 (EKPEDGQAGQQAMS) are Extracellular-facing. Residues 285-305 (LAILRVIRLVRVFRIFKLSRH) form a helical; Voltage-sensor membrane-spanning segment. Over 306–320 (SKGLQILGQTLKASM) the chain is Cytoplasmic. An S4-S5 linker region spans residues 307–320 (KGLQILGQTLKASM). Residues 321-342 (RELGLLIFFLFIGVILFSSAVY) form a helical membrane-spanning segment. Over 343 to 356 (FAEADEPESQFESI) the chain is Extracellular. The helical intramembrane region spans 357–368 (PDAFWWAVVSMT). The Selectivity filter motif lies at 369–374 (TVGYGD). Residues 369–376 (TVGYGDMV) lie within the membrane without spanning it. Over 377 to 383 (PTTIGGK) the chain is Extracellular. The helical transmembrane segment at 384 to 412 (IVGSLCAIAGVLTIALPVPVIVSNFNYFY) threads the bilayer. The Cytoplasmic portion of the chain corresponds to 413–494 (HRETEGEEQA…VNITKMLTDV (82 aa)). The PDZ-binding signature appears at 492 to 494 (TDV).

This sequence belongs to the potassium channel family. A (Shaker) (TC 1.A.1.2) subfamily. Kv1.2/KCNA2 sub-subfamily. As to quaternary structure, homotetramer and heterotetramer with other family members. As to expression, expressed in oligodendrocytes.

The protein localises to the cell membrane. The catalysed reaction is K(+)(in) = K(+)(out). Functionally, voltage-gated potassium channel that mediates transmembrane potassium transport in excitable membranes, primarily in the brain and central nervous system. Prevents aberrant action potential firing and regulates neuronal output. Forms tetrameric potassium-selective channels through which potassium ions pass in accordance with their electrochemical gradient. The channel alternates between opened and closed conformations in response to the voltage difference across the membrane. Can form functional homotetrameric channels and heterotetrameric channels with other family members; the channels characteristics depend critically on the types of channel-forming alpha subunits that are present. Channel properties are modulated by cytoplasmic beta subunits that regulate the subcellular location of the alpha subunits. In vivo, membranes probably contain a mixture of heteromeric potassium channel complexes, making it difficult to assign currents observed in intact tissues to any particular potassium channel family member. Homotetrameric KCNA2 forms a delayed-rectifier potassium channel that opens in response to membrane depolarization, followed by slow spontaneous channel closure. Regulates neuronal excitability and plays a role as pacemaker in the regulation of neuronal action potentials. KCNA2-containing channels play a presynaptic role and prevent hyperexcitability and aberrant action potential firing. Response to toxins that are selective for KCNA2-containing potassium channels suggests that in Purkinje cells, dendritic subthreshold KCNA2-containing potassium channels prevent random spontaneous calcium spikes, suppressing dendritic hyperexcitability without hindering the generation of somatic action potentials, and thereby play an important role in motor coordination. Plays a role in the induction of long-term potentiation of neuron excitability in the CA3 layer of the hippocampus. The sequence is that of Potassium voltage-gated channel subfamily A member 2 (kcna2) from Oncorhynchus mykiss (Rainbow trout).